The primary structure comprises 505 residues: Beta-agarase (505 aa).

An N-terminal signal peptide occupies residues 1–23; it reads MLKVIPWLLVTSSLVAIPTYIHA. Residue E200 is the Proton donor of the active site. E322 functions as the Nucleophile in the catalytic mechanism.

This sequence belongs to the glycosyl hydrolase 86 family.

Its subcellular location is the secreted. The enzyme catalyses Hydrolysis of (1-&gt;4)-beta-D-galactosidic linkages in agarose, giving the tetramer as the predominant product.. Hydrolase that cleaves agar at the (1-&gt;4) linkage, producing tetrameric saccharide molecules. Is specific for agar and agarose and does not digest alginate or carrageenan. This chain is Beta-agarase, found in Pseudoalteromonas atlantica (Alteromonas atlantica).